A 76-amino-acid chain; its full sequence is Brevinin-2ISb (76 aa).

A signal peptide spans 1–22 (MFTMKKSLLVLFFLGTISLSLC). A propeptide spans 23–41 (QEERNADEEDGGEATEEEV) (removed in mature form). A disulfide bridge connects residues C70 and C76.

Expressed by the skin glands.

It localises to the secreted. Its function is as follows. Has antimicrobial activity against Gram-negative bacterium E.coli ATCC 8739 (MIC=12.5 ug), against Gram positive bacteria S.aureus ATCC 6538 (MIC=6.3 ug) and B.subtilis ATCC 6633 (MIC=25 ug). Has no activity against methicillin-resistant S.aureus ATCC 43300 (MIC= ug) and fungus C.albicans ATCC 90028. This Odorrana ishikawae (Ishikawa's frog) protein is Brevinin-2ISb.